A 514-amino-acid polypeptide reads, in one-letter code: Peptide chain release factor 3 (514 aa).

Residues 8-268 (KKRRTFAIIS…TFLEFAPEPH (261 aa)) enclose the tr-type G domain. GTP contacts are provided by residues 17-24 (SHPDAGKT), 85-89 (DTPGH), and 139-142 (NKLD).

The protein belongs to the TRAFAC class translation factor GTPase superfamily. Classic translation factor GTPase family. PrfC subfamily.

Its subcellular location is the cytoplasm. In terms of biological role, increases the formation of ribosomal termination complexes and stimulates activities of RF-1 and RF-2. It binds guanine nucleotides and has strong preference for UGA stop codons. It may interact directly with the ribosome. The stimulation of RF-1 and RF-2 is significantly reduced by GTP and GDP, but not by GMP. This Streptococcus pyogenes serotype M49 (strain NZ131) protein is Peptide chain release factor 3.